The chain runs to 126 residues: Methylglyoxal synthase (126 aa).

Residues 1–126 (MAGGKCIALI…AERLIKTLNH (126 aa)) enclose the MGS-like domain. Substrate is bound by residues His12, Lys16, 38-41 (TGTT), and 59-60 (SG). The Proton donor/acceptor role is filled by Asp65. A substrate-binding site is contributed by His92.

It belongs to the methylglyoxal synthase family.

It carries out the reaction dihydroxyacetone phosphate = methylglyoxal + phosphate. Its function is as follows. Catalyzes the formation of methylglyoxal from dihydroxyacetone phosphate. The sequence is that of Methylglyoxal synthase from Rhizobium rhizogenes (strain K84 / ATCC BAA-868) (Agrobacterium radiobacter).